The sequence spans 476 residues: Aspartyl/glutamyl-tRNA(Asn/Gln) amidotransferase subunit B (476 aa).

Belongs to the GatB/GatE family. GatB subfamily. In terms of assembly, heterotrimer of A, B and C subunits.

It catalyses the reaction L-glutamyl-tRNA(Gln) + L-glutamine + ATP + H2O = L-glutaminyl-tRNA(Gln) + L-glutamate + ADP + phosphate + H(+). The enzyme catalyses L-aspartyl-tRNA(Asn) + L-glutamine + ATP + H2O = L-asparaginyl-tRNA(Asn) + L-glutamate + ADP + phosphate + 2 H(+). In terms of biological role, allows the formation of correctly charged Asn-tRNA(Asn) or Gln-tRNA(Gln) through the transamidation of misacylated Asp-tRNA(Asn) or Glu-tRNA(Gln) in organisms which lack either or both of asparaginyl-tRNA or glutaminyl-tRNA synthetases. The reaction takes place in the presence of glutamine and ATP through an activated phospho-Asp-tRNA(Asn) or phospho-Glu-tRNA(Gln). The polypeptide is Aspartyl/glutamyl-tRNA(Asn/Gln) amidotransferase subunit B (Listeria innocua serovar 6a (strain ATCC BAA-680 / CLIP 11262)).